Here is a 558-residue protein sequence, read N- to C-terminus: MPALLLLGTVALLASAAGPAGARPSNDTSSVAPGPLPALLAHLRRLTGALAGGGSAAGTSANATKTSPASGTGAAARAPPPAELCHGYYDVMGQYDATFNCSTGSYRFCCGTCHYRFCCEHRHMRLAQASCSNYDTPRWATTPPPLAGGAGGAGGAGGGPGPGQAGWLEGGRAGGAGGRGGEGPGGSTAYVVCGVISFALAVGVGAKVAFSKASRAPRAHREINVPRALVDILRHQAGPATRPDRARSSSLTPGLGGPDSMAPRTPKNLYNTMKPSNLDNLHYNVNSPKHHAATLDWRAMPPPSPSLHYSTLSCSRSFHNLSHLPPSYEAAVKSELNRYSSLKRLAEKDLDEAYLKRRQLEMPRGTLPLHALRRPGTGGGYRMDGWGGPEELGLAPAPNPRRVMSQEHLLGDGSRASRYEFTLPRARLVSQEHLLLSSPEALRQSREHLLSPPRSPALPPDPTTRASLAASHSNLLLGPGGPPTPLHGLPPSGLHAHHHHALHGSPQPAWMSDAGGGGGTLARRPPFQRQGTLEQLQFIPGHHLPQHLRTASKNEVTV.

Residues 1–22 (MPALLLLGTVALLASAAGPAGA) form the signal peptide. The Extracellular segment spans residues 23 to 189 (RPSNDTSSVA…GGEGPGGSTA (167 aa)). N26 carries an N-linked (GlcNAc...) asparagine glycan. Disordered stretches follow at residues 53 to 79 (GGSAAGTSANATKTSPASGTGAAARAP) and 142 to 181 (TPPPLAGGAGGAGGAGGGPGPGQAGWLEGGRAGGAGGRGG). The segment covering 57-77 (AGTSANATKTSPASGTGAAAR) has biased composition (low complexity). Residues 148–181 (GGAGGAGGAGGGPGPGQAGWLEGGRAGGAGGRGG) show a composition bias toward gly residues. The GRID stretch occupies residues 154–175 (GGAGGGPGPGQAGWLEGGRAGG). The chain crosses the membrane as a helical span at residues 190-210 (YVVCGVISFALAVGVGAKVAF). Topologically, residues 211-558 (SKASRAPRAH…RTASKNEVTV (348 aa)) are cytoplasmic. Residues 236 to 263 (QAGPATRPDRARSSSLTPGLGGPDSMAP) form a disordered region. S438 is modified (phosphoserine). Residues 443 to 506 (RQSREHLLSP…HHHHALHGSP (64 aa)) are disordered. The span at 453–462 (PRSPALPPDP) shows a compositional bias: pro residues. The segment covering 466–477 (ASLAASHSNLLL) has biased composition (low complexity). Position 532 is a phosphothreonine (T532). The short motif at 555–558 (EVTV) is the PDZ-binding element.

The protein belongs to the shisa family. Interacts with GABA(A)R (GABA type A receptor) subunits GABRA1, GABRA2 and GABRG2; the interaction is direct. Does not interact with GABRB2 and GABRB3 subunits. Interacts with AMPAR subunits GRIA1, GRIA2 and GRIA3 and AMPAR auxiliary proteins SHISA6 and SHISA7 in heterologous cells. Interacts (via PDZ-binding motif) with DLG4/PSD-95 (via PDZ domain)in heterologous cells; the interaction is direct. N-glycosylated. In terms of tissue distribution, mainly expressed in neurons. Highly expressed in brain structures including cortex, striatum, olfactory bulb, amygdala hippocampus CA1-3 and dentate gyrus (at protein level).

The protein resides in the postsynaptic density membrane. Functionally, transmembrane protein that regulates gamma-aminobutyric acid type A receptor (GABA(A)R) trafficking, channel deactivation kinetics and pharmacology, necessary for fast inhibitory transmission in the brain. Enhances the action of benzodiazepine, a primary GABA(A)Rs target drug, in the brain. May affect channel kinetics of AMPA-type glutamate receptors (AMPAR), the brain's main excitatory neurotransmitter, necessary for synaptic hippocampal plasticity, and memory recall. May regulate the induction and maintenance of long-term potentiation at Schaffer collaterals/CA3-CA1 excitatory synapses. This chain is Protein shisa-7, found in Mus musculus (Mouse).